We begin with the raw amino-acid sequence, 323 residues long: Ribokinase (323 aa).

Substrate-binding positions include 26 to 28 (MTD), 54 to 58 (GKGAN), and Glu-155. Residues Asn-200, 236–241 (TLGASG), and Thr-257 each bind ATP. K(+)-binding residues include Asp-264 and Thr-266. ATP is bound by residues 269–270 (GD) and Asn-296. Asp-270 contributes to the substrate binding site. Catalysis depends on Asp-270, which acts as the Proton acceptor. K(+)-binding residues include Ser-302, Ala-305, Gly-307, and Ser-311.

The protein belongs to the carbohydrate kinase PfkB family. Ribokinase subfamily. In terms of assembly, homodimer. Mg(2+) is required as a cofactor.

It is found in the cytoplasm. Its subcellular location is the nucleus. It catalyses the reaction D-ribose + ATP = D-ribose 5-phosphate + ADP + H(+). The protein operates within carbohydrate metabolism; D-ribose degradation; D-ribose 5-phosphate from beta-D-ribopyranose: step 2/2. With respect to regulation, activated by a monovalent cation that binds near, but not in, the active site. The most likely occupant of the site in vivo is potassium. Ion binding induces a conformational change that may alter substrate affinity. Competitively inhibited by phosphonoacetic acid, etidronate, 2-carboxethylphosphonic acid, N-(phosphonomethyl)glycine, N-(phosphonomethyl)iminodiacetic acid and clodronate. Functionally, catalyzes the phosphorylation of ribose at O-5 in a reaction requiring ATP and magnesium. The resulting D-ribose-5-phosphate can then be used either for sythesis of nucleotides, histidine, and tryptophan, or as a component of the pentose phosphate pathway. This is Ribokinase from Mus musculus (Mouse).